The primary structure comprises 188 residues: Peptidyl-tRNA hydrolase (188 aa).

Tyr16 is a tRNA binding site. His21 functions as the Proton acceptor in the catalytic mechanism. Residues Phe66, Asn68, and Asn114 each contribute to the tRNA site.

Belongs to the PTH family. Monomer.

The protein localises to the cytoplasm. The catalysed reaction is an N-acyl-L-alpha-aminoacyl-tRNA + H2O = an N-acyl-L-amino acid + a tRNA + H(+). Functionally, hydrolyzes ribosome-free peptidyl-tRNAs (with 1 or more amino acids incorporated), which drop off the ribosome during protein synthesis, or as a result of ribosome stalling. Its function is as follows. Catalyzes the release of premature peptidyl moieties from peptidyl-tRNA molecules trapped in stalled 50S ribosomal subunits, and thus maintains levels of free tRNAs and 50S ribosomes. In Geobacter sp. (strain M21), this protein is Peptidyl-tRNA hydrolase.